The following is a 263-amino-acid chain: Pyruvate formate-lyase-activating enzyme (263 aa).

The region spanning 23–260 is the Radical SAM core domain; sequence VDGPGIRFVV…TETYEEYKKR (238 aa). C37, C41, and C44 together coordinate [4Fe-4S] cluster. S-adenosyl-L-methionine contacts are provided by residues 43-45, G87, 142-144, and H215; these read YCH and DIK.

Belongs to the organic radical-activating enzymes family. It depends on [4Fe-4S] cluster as a cofactor.

The protein resides in the cytoplasm. The enzyme catalyses glycyl-[formate C-acetyltransferase] + reduced [flavodoxin] + S-adenosyl-L-methionine = glycin-2-yl radical-[formate C-acetyltransferase] + semiquinone [flavodoxin] + 5'-deoxyadenosine + L-methionine + H(+). Functionally, activation of pyruvate formate-lyase under anaerobic conditions by generation of an organic free radical, using S-adenosylmethionine and reduced flavodoxin as cosubstrates to produce 5'-deoxy-adenosine. The chain is Pyruvate formate-lyase-activating enzyme (act) from Streptococcus mutans serotype c (strain ATCC 700610 / UA159).